The chain runs to 608 residues: Altered inheritance of mitochondria protein 9, mitochondrial (608 aa).

The N-terminal 21 residues, 1–21 (MLRRIVNTGTKRLFRVPPRSS), are a transit peptide targeting the mitochondrion.

It belongs to the AIM9 family.

It localises to the mitochondrion. The sequence is that of Altered inheritance of mitochondria protein 9, mitochondrial (AIM9) from Clavispora lusitaniae (strain ATCC 42720) (Yeast).